The primary structure comprises 219 residues: Non-specific lipid transfer protein GPI-anchored 25 (219 aa).

Residues 1–22 (MATKITGVFILILTITFSSSSA) form the signal peptide. Cystine bridges form between Cys39–Cys85, Cys49–Cys68, Cys69–Cys110, and Cys83–Cys123. N-linked (GlcNAc...) asparagine glycosylation occurs at Asn59. An N-linked (GlcNAc...) asparagine glycan is attached at Asn148. The tract at residues 152–181 (SPQSVDLAPEVSPSSDLFSPETATLAPPPP) is disordered. Ser192 carries GPI-anchor amidated serine lipidation. Residues 193 to 219 (SDSLKIRNFWFPSTIIMTFATSILARI) constitute a propeptide, removed in mature form.

Belongs to the plant LTP family.

It is found in the cell membrane. Probable lipid transfer protein. The chain is Non-specific lipid transfer protein GPI-anchored 25 from Arabidopsis thaliana (Mouse-ear cress).